The following is a 191-amino-acid chain: Probable DNA-directed RNA polymerase subunit delta (191 aa).

Positions 14-83 constitute an HTH HARE-type domain; that stretch reads LSMIEVARAI…GENKWGLRSW (70 aa). The disordered stretch occupies residues 118–191; that stretch reads DEDAIDYRDD…EDEEDEEPVL (74 aa).

This sequence belongs to the RpoE family. In terms of assembly, RNAP is composed of a core of 2 alpha, a beta and a beta' subunits. The core is associated with a delta subunit and one of several sigma factors.

In terms of biological role, participates in both the initiation and recycling phases of transcription. In the presence of the delta subunit, RNAP displays an increased specificity of transcription, a decreased affinity for nucleic acids, and an increased efficiency of RNA synthesis because of enhanced recycling. The chain is Probable DNA-directed RNA polymerase subunit delta from Streptococcus pyogenes serotype M18 (strain MGAS8232).